The sequence spans 272 residues: Shikimate dehydrogenase (NADP(+)) (272 aa).

Residues 14 to 16 (SKS) and Thr61 each bind shikimate. Catalysis depends on Lys65, which acts as the Proton acceptor. NADP(+) is bound at residue Glu77. Shikimate is bound by residues Asn86 and Asp102. NADP(+) contacts are provided by residues 126–130 (GAGGA), 149–154 (NRTVSR), and Met213. Tyr215 serves as a coordination point for shikimate. Gly237 is a binding site for NADP(+).

The protein belongs to the shikimate dehydrogenase family. Homodimer.

It carries out the reaction shikimate + NADP(+) = 3-dehydroshikimate + NADPH + H(+). It participates in metabolic intermediate biosynthesis; chorismate biosynthesis; chorismate from D-erythrose 4-phosphate and phosphoenolpyruvate: step 4/7. Involved in the biosynthesis of the chorismate, which leads to the biosynthesis of aromatic amino acids. Catalyzes the reversible NADPH linked reduction of 3-dehydroshikimate (DHSA) to yield shikimate (SA). In Escherichia coli O139:H28 (strain E24377A / ETEC), this protein is Shikimate dehydrogenase (NADP(+)).